A 460-amino-acid chain; its full sequence is MQKTYIWALVSLLASSLVDARSAVFDQTPLDIGGSDDSFDSIARIDPNNNDLLKSEMDKVIASSELLSLHRALVEIKSISDNEQAVGGFLMDYLYSKNFTVEKQYVDYDDPTGKPIRSNRRFNIYAYPGNSASPGIILTSHIDTVPPFIPYSLSHPESASFKRDDILISGRGTVDDKASVACQVIAAMDHLEKHPDIPIGLLFVVSEEVGGRGMSTFSNSRLNSGTYHTIIFGEPTERALVAGHKGMVSFTIRVHGKPAHSGYPWLGRSAVSEMLPILTEVDRLGDIPVSQGGLPSSEKYGRTTLNIGFMSGGVAANVVAEEAVANVAVRLAAGNPEDAKDIIFRAIRNAATKHRKDATVVISNGLERPKGDIEVIFGLEAYGVVDIDADVDGFNVTTVNYGTDVPHWKIYGDNVKRYLYGPGTIFVAHGKNEALTVGELEAGLEGYKTLVAKAAERERS.

The signal sequence occupies residues 1–22 (MQKTYIWALVSLLASSLVDARS). Asn-98 carries an N-linked (GlcNAc...) asparagine glycan. Asp-175 serves as a coordination point for Zn(2+). Glu-207 acts as the Proton acceptor in catalysis. Residue Glu-208 coordinates Zn(2+). The N-linked (GlcNAc...) asparagine glycan is linked to Asn-395.

Belongs to the peptidase M20A family. Zn(2+) serves as cofactor.

The protein localises to the secreted. This is Probable carboxypeptidase ARB_01041 from Arthroderma benhamiae (strain ATCC MYA-4681 / CBS 112371) (Trichophyton mentagrophytes).